The primary structure comprises 73 residues: Conotoxin ArMKLT2-022 (73 aa).

An N-terminal signal peptide occupies residues 1–22; the sequence is MKLTCVLIIAVLFLTACQLTTG. The propeptide occupies 23–40; that stretch reads EQKDHAQRSADRNSKLTR. A Pyrrolidone carboxylic acid modification is found at glutamine 41. Disulfide bonds link cysteine 42-cysteine 56, cysteine 49-cysteine 60, and cysteine 55-cysteine 67.

This sequence belongs to the conotoxin O1 superfamily. As to expression, expressed by the venom duct.

Its subcellular location is the secreted. The protein is Conotoxin ArMKLT2-022 of Conus arenatus (Sand-dusted cone).